The primary structure comprises 133 residues: Male-specific protein scotti (133 aa).

Residues 11–57 form a disordered region; it reads FPSNGLGNNNNDPNQQRGERPRQPHPDLGWILDAPNEPPRNRNPLLY. A compositionally biased stretch (low complexity) spans 14-24; sequence NGLGNNNNDPN. Asn-83 carries an N-linked (GlcNAc...) asparagine glycan.

The protein belongs to the male-specific scotti family.

Its function is as follows. Post-meiotically transcribed gene that has a role in late spermiogenesis; required for actin cone progression during spermatid individualization. This is Male-specific protein scotti from Drosophila persimilis (Fruit fly).